The sequence spans 216 residues: ATP phosphoribosyltransferase (216 aa).

The protein belongs to the ATP phosphoribosyltransferase family. Short subfamily. Heteromultimer composed of HisG and HisZ subunits.

It localises to the cytoplasm. The enzyme catalyses 1-(5-phospho-beta-D-ribosyl)-ATP + diphosphate = 5-phospho-alpha-D-ribose 1-diphosphate + ATP. It functions in the pathway amino-acid biosynthesis; L-histidine biosynthesis; L-histidine from 5-phospho-alpha-D-ribose 1-diphosphate: step 1/9. In terms of biological role, catalyzes the condensation of ATP and 5-phosphoribose 1-diphosphate to form N'-(5'-phosphoribosyl)-ATP (PR-ATP). Has a crucial role in the pathway because the rate of histidine biosynthesis seems to be controlled primarily by regulation of HisG enzymatic activity. In Synechococcus sp. (strain CC9902), this protein is ATP phosphoribosyltransferase.